The chain runs to 154 residues: Protein X (154 aa).

The segment at P68–F117 is mitochondrial targeting sequence.

This sequence belongs to the orthohepadnavirus protein X family. As to quaternary structure, may form homodimer. May interact with host CEBPA, CFLAR, CREB1, DDB1, E4F1, HBXIP, HSPD1/HSP60, NFKBIA, POLR2E and SMAD4. Interacts with host SMC5-SMC6 complex and induces its degradation. Interacts with host TRPC4AP; leading to prevent ubiquitination of TRPC4AP. Interacts with host PLSCR1; this interaction promotes ubiquitination and degradation of HBx and impairs HBx-mediated cell proliferation. A fraction may be phosphorylated in insect cells and HepG2 cells, a human hepatoblastoma cell line. Phosphorylated in vitro by host protein kinase C or mitogen-activated protein kinase. N-acetylated in insect cells.

The protein localises to the host cytoplasm. It is found in the host nucleus. The protein resides in the host mitochondrion. Its function is as follows. Multifunctional protein that plays a role in silencing host antiviral defenses and promoting viral transcription. Does not seem to be essential for HBV infection. May be directly involved in development of cirrhosis and liver cancer (hepatocellular carcinoma). Most of cytosolic activities involve modulation of cytosolic calcium. The effect on apoptosis is controversial depending on the cell types in which the studies have been conducted. May induce apoptosis by localizing in mitochondria and causing loss of mitochondrial membrane potential. May also modulate apoptosis by binding host CFLAR, a key regulator of the death-inducing signaling complex (DISC). Promotes viral transcription by using the host E3 ubiquitin ligase DDB1 to target the SMC5-SMC6 complex to proteasomal degradation. This host complex would otherwise bind to viral episomal DNA, and prevents its transcription. Moderately stimulates transcription of many different viral and cellular transcription elements. Promoters and enhancers stimulated by HBx contain DNA binding sites for NF-kappa-B, AP-1, AP-2, c-EBP, ATF/CREB, or the calcium-activated factor NF-AT. The sequence is that of Protein X from Homo sapiens (Human).